Consider the following 648-residue polypeptide: Protein KASH5 (648 aa).

The Cytoplasmic segment spans residues 1-606; that stretch reads MHSILRSSLS…HSPGIRISQH (606 aa). The interval 206-228 is disordered; sequence PEAEESANLESFGGEDPRPEGPA. A coiled-coil region spans residues 230–420; the sequence is AELLSNLEDL…EEQLSQSQEG (191 aa). Positions 473–497 are enriched in acidic residues; sequence EVEPEPEPEPEPEPEPEPQEVEFPS. Residues 473–545 form a disordered region; that stretch reads EVEPEPEPEP…EESWVLADPS (73 aa). The helical; Anchor for type IV membrane protein transmembrane segment at 607–627 threads the bilayer; it reads PLVPTPVLGLLLLLLLSILLF. Residues 628-648 lie on the Perinuclear space side of the membrane; that stretch reads SQSPPPTWPHLQLYYLQPPPV.

As to quaternary structure, core component the LINC complex which is composed of inner nuclear membrane SUN domain-containing proteins coupled to outer nuclear membrane KASH domain-containing nesprins. SUN and KASH domain-containing proteins seem to bind each other promiscuously; however, differentially expression of LINC complex constituents is giving rise to specific assemblies. At least SUN1/2-containing core LINC complexes are proposed to be hexameric composed of three protomers of each KASH and SUN domain-containing protein. Interacts with SUN1; this interaction mediates its telomere localization by forming a SUN1:KASH5 LINC complex. Component of a probable SUN2:KASH5 LINC complex. Self-associates. Interacts with DYNC1H1, DCTN1, DYNC1I1/2 and PAFAH1B1; suggesting the association with the dynein-dynactin motor complex. In terms of tissue distribution, restricted to the testis and the early ootidogenesis ovary. Expressed in spermatocytes and oocytes (at protein level).

It localises to the nucleus outer membrane. Its subcellular location is the nucleus. The protein localises to the chromosome. The protein resides in the telomere. It is found in the nucleus envelope. In terms of biological role, as a component of the LINC (LInker of Nucleoskeleton and Cytoskeleton) complex, involved in the connection between the nuclear lamina and the cytoskeleton. The nucleocytoplasmic interactions established by the LINC complex play an important role in the transmission of mechanical forces across the nuclear envelope and in nuclear movement and positioning. Required for telomere attachment to nuclear envelope in the prophase of meiosis and for rapid telomere prophase movements implicating a SUN1/2:KASH5 LINC complex in which SUN1 and SUN2 seem to act at least partial redundantly. Required for homolog pairing during meiotic prophase in spermatocytes and probably oocytes. Essential for male and female gametogenesis. Recruits cytoplasmic dynein to telomere attachment sites at the nuclear envelope in spermatocytes. In oocytes is involved in meiotic resumption and spindle formation. This is Protein KASH5 from Mus musculus (Mouse).